A 527-amino-acid polypeptide reads, in one-letter code: Cytochrome b5 reductase 4 (527 aa).

Residues 1-24 are disordered; sequence MLNVPSQAFPAAGSQQRVAPAGQS. Residues 56–132 form the Cytochrome b5 heme-binding domain; sequence LIEVTEDELK…LKECLVGRMA (77 aa). His-91 and His-114 together coordinate heme. Positions 138 to 171 are disordered; that stretch reads ALQAHTEKTESTHLNGLSAPPSLRPEPLSAPLPA. The CS domain occupies 173–264; it reads DHRPRYDWFQ…SVKEKWTQLG (92 aa). Positions 281–392 constitute an FAD-binding FR-type domain; sequence LFYRECVLLS…GGPEGSFTLR (112 aa). Residues 372 to 387 and 399 to 431 contribute to the FAD site; these read ANLP…GPEG and HLYM…KMKL.

Belongs to the flavoprotein pyridine nucleotide cytochrome reductase family. FAD serves as cofactor.

It localises to the endoplasmic reticulum. It catalyses the reaction 2 Fe(III)-[cytochrome b5] + NADH = 2 Fe(II)-[cytochrome b5] + NAD(+) + H(+). Its function is as follows. NADH-cytochrome b5 reductase involved in endoplasmic reticulum stress response pathway. This Danio rerio (Zebrafish) protein is Cytochrome b5 reductase 4 (cyb5r4).